A 353-amino-acid polypeptide reads, in one-letter code: Guanine nucleotide-binding protein subunit alpha (353 aa).

Glycine 2 is lipidated: N-myristoyl glycine. Cysteine 3 carries S-palmitoyl cysteine lipidation. A G-alpha domain is found at 33–353 (NEIKMLLLGA…QLHLRECGLL (321 aa)). The interval 36-49 (KMLLLGAGESGKST) is G1 motif. GTP-binding residues include glutamate 44, serine 45, glycine 46, lysine 47, serine 48, threonine 49, aspartate 150, leucine 175, threonine 181, glycine 203, asparagine 269, lysine 270, aspartate 272, and alanine 325. Residue serine 48 coordinates Mg(2+). The G2 motif stretch occupies residues 173-181 (DILRSRVKT). Threonine 181 is a Mg(2+) binding site. The interval 196-205 (YKLFDVGGQR) is G3 motif. The tract at residues 265–272 (ILFLNKID) is G4 motif. The tract at residues 323-328 (TCATDT) is G5 motif.

It belongs to the G-alpha family. G(q) subfamily. As to quaternary structure, g proteins are composed of 3 units; alpha, beta and gamma. The alpha chain contains the guanine nucleotide binding site. It depends on Mg(2+) as a cofactor.

Functionally, guanine nucleotide-binding proteins (G proteins) are involved as modulators or transducers in various transmembrane signaling systems. This is Guanine nucleotide-binding protein subunit alpha (CGP1) from Coprinellus congregatus (Inky cap fungus).